The sequence spans 257 residues: NAD-capped RNA hydrolase NudC (257 aa).

Arg-69 provides a ligand contact to substrate. Zn(2+) is bound by residues Cys-98 and Cys-101. Glu-111 contacts substrate. Residues Cys-116 and Cys-119 each coordinate Zn(2+). Residue Tyr-124 participates in substrate binding. One can recognise a Nudix hydrolase domain in the interval 125–248 (PQIAPCIIVA…TVARRLIEDT (124 aa)). The a divalent metal cation site is built by Ala-158, Glu-174, and Glu-178. Positions 159 to 180 (GFVEVGETLEQAVAREVMEESG) match the Nudix box motif. 192–199 (QPWPFPQS) serves as a coordination point for substrate. Position 219 (Glu-219) interacts with a divalent metal cation. Residue Ala-241 coordinates substrate.

The protein belongs to the Nudix hydrolase family. NudC subfamily. In terms of assembly, homodimer. Requires Mg(2+) as cofactor. The cofactor is Mn(2+). Zn(2+) is required as a cofactor.

The enzyme catalyses a 5'-end NAD(+)-phospho-ribonucleoside in mRNA + H2O = a 5'-end phospho-adenosine-phospho-ribonucleoside in mRNA + beta-nicotinamide D-ribonucleotide + 2 H(+). The catalysed reaction is NAD(+) + H2O = beta-nicotinamide D-ribonucleotide + AMP + 2 H(+). It carries out the reaction NADH + H2O = reduced beta-nicotinamide D-ribonucleotide + AMP + 2 H(+). Its function is as follows. mRNA decapping enzyme that specifically removes the nicotinamide adenine dinucleotide (NAD) cap from a subset of mRNAs by hydrolyzing the diphosphate linkage to produce nicotinamide mononucleotide (NMN) and 5' monophosphate mRNA. The NAD-cap is present at the 5'-end of some mRNAs and stabilizes RNA against 5'-processing. Has preference for mRNAs with a 5'-end purine. Catalyzes the hydrolysis of a broad range of dinucleotide pyrophosphates. The protein is NAD-capped RNA hydrolase NudC of Salmonella schwarzengrund (strain CVM19633).